The chain runs to 147 residues: MANNYGNAGYNGPTNGPYGNAGYNGANGPYGNNSVHQGQPHTDQNGVPILHYGNGGYNGPQAQYGNAGQNQPSGPFGGAGYTGPTAGTGFGNAGYTPSPPAGVPGNGFVPGGVDVHDDHHHDGHHKKHGRKEHDHHHGHHHGHHHKH.

A disordered region spans residues 29–147 (PYGNNSVHQG…GHHHGHHHKH (119 aa)). Composition is skewed to polar residues over residues 34 to 45 (SVHQGQPHTDQN) and 60 to 73 (PQAQ…NQPS). The span at 75 to 92 (PFGGAGYTGPTAGTGFGN) shows a compositional bias: gly residues. Basic residues predominate over residues 122-147 (DGHHKKHGRKEHDHHHGHHHGHHHKH).

This is an uncharacterized protein from Caenorhabditis elegans.